Reading from the N-terminus, the 210-residue chain is HTH-type transcriptional repressor FabR (210 aa).

Residues K10 to L70 form the HTH tetR-type domain. Residues S33–F52 constitute a DNA-binding region (H-T-H motif).

In terms of assembly, homodimer.

Its subcellular location is the cytoplasm. Functionally, represses the transcription of fabB, involved in unsaturated fatty acid (UFA) biosynthesis. By controlling UFA production, FabR directly influences the physical properties of the membrane bilayer. The polypeptide is HTH-type transcriptional repressor FabR (Citrobacter koseri (strain ATCC BAA-895 / CDC 4225-83 / SGSC4696)).